Reading from the N-terminus, the 287-residue chain is Putative S-adenosyl-L-methionine-dependent methyltransferase SACE_1742 (287 aa).

S-adenosyl-L-methionine is bound by residues aspartate 119 and aspartate 148 to leucine 149.

It belongs to the UPF0677 family.

Its function is as follows. Exhibits S-adenosyl-L-methionine-dependent methyltransferase activity. The polypeptide is Putative S-adenosyl-L-methionine-dependent methyltransferase SACE_1742 (Saccharopolyspora erythraea (strain ATCC 11635 / DSM 40517 / JCM 4748 / NBRC 13426 / NCIMB 8594 / NRRL 2338)).